The following is a 614-amino-acid chain: Pentatricopeptide repeat-containing protein At1g63080, mitochondrial (614 aa).

A mitochondrion-targeting transit peptide spans 1 to 7; sequence MSLAKRF. 15 PPR repeats span residues 64–98, 99–133, 134–168, 169–203, 204–238, 239–273, 274–308, 309–343, 344–378, 379–413, 414–448, 449–483, 484–518, 519–553, and 554–588; these read SIVEFSKLLSAIAKMKKFDLVISFGEKMEILGVSH, NLYTYNIMINCLCRRSQLSFALAILGKMMKLGYGP, SIVTLNSLLNGFCHGNRISEAVALVDQMVEMGYQP, DTVTFTTLVHGLFQHNKASEAVALVERMVVKGCQP, DLVTYGAVINGLCKRGEPDLALNLLNKMEKGKIEA, DVVIYSTVIDSLCKYRHVDDALNLFTEMDNKGIRP, DVFTYSSLISCLCNYGRWSDASRLLSDMLERKINP, NVVTFNSLIDAFAKEGKLIEAEKLFDEMIQRSIDP, NIVTYNSLINGFCMHDRLDEAQQIFTLMVSKDCLP, DVVTYNTLINGFCKAKKVVDGMELFRDMSRRGLVG, NTVTYTTLIHGFFQASDCDNAQMVFKQMVSDGVHP, NIMTYNTLLDGLCKNGKLEKAMVVFEYLQKSKMEP, DIYTYNIMSEGMCKAGKVEDGWDLFCSLSLKGVKP, DVIAYNTMISGFCKKGLKEEAYTLFIKMKEDGPLP, and DSGTYNTLIRAHLRDGDKAASAELIKEMRSCRFAG.

Belongs to the PPR family. P subfamily.

The protein localises to the mitochondrion. The sequence is that of Pentatricopeptide repeat-containing protein At1g63080, mitochondrial from Arabidopsis thaliana (Mouse-ear cress).